The primary structure comprises 427 residues: Glutamate-1-semialdehyde 2,1-aminomutase (427 aa).

Residue lysine 265 is modified to N6-(pyridoxal phosphate)lysine.

It belongs to the class-III pyridoxal-phosphate-dependent aminotransferase family. HemL subfamily. In terms of assembly, homodimer. Pyridoxal 5'-phosphate is required as a cofactor.

The protein localises to the cytoplasm. It carries out the reaction (S)-4-amino-5-oxopentanoate = 5-aminolevulinate. Its pathway is porphyrin-containing compound metabolism; protoporphyrin-IX biosynthesis; 5-aminolevulinate from L-glutamyl-tRNA(Glu): step 2/2. This chain is Glutamate-1-semialdehyde 2,1-aminomutase, found in Actinobacillus succinogenes (strain ATCC 55618 / DSM 22257 / CCUG 43843 / 130Z).